Consider the following 269-residue polypeptide: Glutamate racemase (269 aa).

Substrate is bound by residues 7–8 and 39–40; these read DS and YG. Cys70 acts as the Proton donor/acceptor in catalysis. 71-72 contributes to the substrate binding site; sequence NT. The active-site Proton donor/acceptor is Cys194. Residue 195 to 196 participates in substrate binding; sequence TH.

It belongs to the aspartate/glutamate racemases family.

The enzyme catalyses L-glutamate = D-glutamate. Its pathway is cell wall biogenesis; peptidoglycan biosynthesis. Functionally, provides the (R)-glutamate required for cell wall biosynthesis. In Ruegeria pomeroyi (strain ATCC 700808 / DSM 15171 / DSS-3) (Silicibacter pomeroyi), this protein is Glutamate racemase.